The following is a 272-amino-acid chain: Ribosomal RNA small subunit methyltransferase A (272 aa).

6 residues coordinate S-adenosyl-L-methionine: Asn18, Leu20, Gly45, Glu66, Asp91, and Asn113.

It belongs to the class I-like SAM-binding methyltransferase superfamily. rRNA adenine N(6)-methyltransferase family. RsmA subfamily.

It localises to the cytoplasm. It carries out the reaction adenosine(1518)/adenosine(1519) in 16S rRNA + 4 S-adenosyl-L-methionine = N(6)-dimethyladenosine(1518)/N(6)-dimethyladenosine(1519) in 16S rRNA + 4 S-adenosyl-L-homocysteine + 4 H(+). Its function is as follows. Specifically dimethylates two adjacent adenosines (A1518 and A1519) in the loop of a conserved hairpin near the 3'-end of 16S rRNA in the 30S particle. May play a critical role in biogenesis of 30S subunits. In Yersinia enterocolitica serotype O:8 / biotype 1B (strain NCTC 13174 / 8081), this protein is Ribosomal RNA small subunit methyltransferase A.